A 213-amino-acid chain; its full sequence is MISITPEILVRAYASGVFPMARAHDDPQLYWIDPDERGVLPLDGLHVSRSLRKVLRHCPFTVTIDTVFVEVLKQCAAPVPGRDETWINAEIEHLFTDLFDLGLGHSVECWQGDQLVGGLYGLAMGGVFFGESMFSRVDNASKVALCHLVARLKRGGFRLLDTQFTTNHLRSMGAVEIARPLYHARLGNALQVMGDFTVDVPDVLAALDTPSGY.

Belongs to the L/F-transferase family.

Its subcellular location is the cytoplasm. It carries out the reaction N-terminal L-lysyl-[protein] + L-leucyl-tRNA(Leu) = N-terminal L-leucyl-L-lysyl-[protein] + tRNA(Leu) + H(+). The enzyme catalyses N-terminal L-arginyl-[protein] + L-leucyl-tRNA(Leu) = N-terminal L-leucyl-L-arginyl-[protein] + tRNA(Leu) + H(+). The catalysed reaction is L-phenylalanyl-tRNA(Phe) + an N-terminal L-alpha-aminoacyl-[protein] = an N-terminal L-phenylalanyl-L-alpha-aminoacyl-[protein] + tRNA(Phe). In terms of biological role, functions in the N-end rule pathway of protein degradation where it conjugates Leu, Phe and, less efficiently, Met from aminoacyl-tRNAs to the N-termini of proteins containing an N-terminal arginine or lysine. This Rhodospirillum rubrum (strain ATCC 11170 / ATH 1.1.1 / DSM 467 / LMG 4362 / NCIMB 8255 / S1) protein is Leucyl/phenylalanyl-tRNA--protein transferase.